The primary structure comprises 161 residues: Large ribosomal subunit protein mL50 (161 aa).

Residues 27 to 51 form a disordered region; sequence WGGHSKKEEKEVEENSIIPQEKKEP.

This sequence belongs to the mitochondrion-specific ribosomal protein mL50 family. As to quaternary structure, component of the mitochondrial ribosome large subunit (39S) which comprises a 16S rRNA and about 50 distinct proteins.

The protein resides in the mitochondrion. This Gallus gallus (Chicken) protein is Large ribosomal subunit protein mL50 (MRPL50).